The following is a 366-amino-acid chain: Histidinol-phosphate aminotransferase 2 (366 aa).

Polar residues predominate over residues 1–11; the sequence is MQVKDQLSSLQ. Residues 1 to 21 are disordered; it reads MQVKDQLSSLQPYKPGKSPEQ. N6-(pyridoxal phosphate)lysine is present on lysine 222.

Belongs to the class-II pyridoxal-phosphate-dependent aminotransferase family. Histidinol-phosphate aminotransferase subfamily. In terms of assembly, homodimer. The cofactor is pyridoxal 5'-phosphate.

The catalysed reaction is L-histidinol phosphate + 2-oxoglutarate = 3-(imidazol-4-yl)-2-oxopropyl phosphate + L-glutamate. It participates in amino-acid biosynthesis; L-histidine biosynthesis; L-histidine from 5-phospho-alpha-D-ribose 1-diphosphate: step 7/9. In Bacillus cereus (strain ATCC 10987 / NRS 248), this protein is Histidinol-phosphate aminotransferase 2.